The following is a 574-amino-acid chain: Eukaryotic translation initiation factor 3 subunit D (574 aa).

The tract at residues 153–178 (QRRGGNARQGQRGQGGRFGGDRPKER) is disordered. Residues 154-163 (RRGGNARQGQ) show a composition bias toward low complexity. The tract at residues 312–326 (PVETLTVSETSAEPP) is RNA gate. The disordered stretch occupies residues 555–574 (EGTFDSERESSEEENSDDDQ). The span at 564–574 (SSEEENSDDDQ) shows a compositional bias: acidic residues.

It belongs to the eIF-3 subunit D family. As to quaternary structure, component of the eukaryotic translation initiation factor 3 (eIF-3) complex.

The protein localises to the cytoplasm. In terms of biological role, mRNA cap-binding component of the eukaryotic translation initiation factor 3 (eIF-3) complex, which is involved in protein synthesis of a specialized repertoire of mRNAs and, together with other initiation factors, stimulates binding of mRNA and methionyl-tRNAi to the 40S ribosome. The eIF-3 complex specifically targets and initiates translation of a subset of mRNAs involved in cell proliferation. In the eIF-3 complex, eif3d specifically recognizes and binds the 7-methylguanosine cap of a subset of mRNAs. This Caenorhabditis briggsae protein is Eukaryotic translation initiation factor 3 subunit D.